The chain runs to 266 residues: Protein crossbronx-like (266 aa).

A UBC core domain is found at 15–178 (KQGYHILAEY…VQEQAILSRN (164 aa)). Residues 234–266 (SSRQLDEEEANQVEKLHRGRIPEHQREESEVSL) are disordered. Residues 245–266 (QVEKLHRGRIPEHQREESEVSL) are compositionally biased toward basic and acidic residues.

The protein belongs to the ubiquitin-conjugating enzyme family. FTS subfamily.

This chain is Protein crossbronx-like, found in Drosophila melanogaster (Fruit fly).